The following is a 321-amino-acid chain: Transmembrane protein fend (321 aa).

An N-terminal signal peptide occupies residues 1 to 18 (MFHSLVLMACALAALSVA). Topologically, residues 19-261 (QGAGSARSKS…ALPTPSELGG (243 aa)) are extracellular. The chain crosses the membrane as a helical span at residues 262 to 282 (VVYPAFGALAFFLALLVMFLF). The Cytoplasmic portion of the chain corresponds to 283–321 (LRPQRKRFPLDADSADTATLIGRSSSSSRNSMDASTLHV).

It localises to the membrane. Its function is as follows. Involved in the normal targeting of ventral muscle, muscle 12, by motoneurons. May function as an axon guidance molecule involved in neuromuscular specificity. This chain is Transmembrane protein fend (fend), found in Drosophila melanogaster (Fruit fly).